The following is a 454-amino-acid chain: Ribosomal protein uS12 methylthiotransferase RimO (454 aa).

The MTTase N-terminal domain maps to Ala19–Ala129. The [4Fe-4S] cluster site is built by Cys28, Cys64, Cys93, Cys161, Cys165, and Cys168. The Radical SAM core domain maps to Leu147–Asp384. The 67-residue stretch at Gln387–Glu453 folds into the TRAM domain.

Belongs to the methylthiotransferase family. RimO subfamily. It depends on [4Fe-4S] cluster as a cofactor.

It is found in the cytoplasm. It catalyses the reaction L-aspartate(89)-[ribosomal protein uS12]-hydrogen + (sulfur carrier)-SH + AH2 + 2 S-adenosyl-L-methionine = 3-methylsulfanyl-L-aspartate(89)-[ribosomal protein uS12]-hydrogen + (sulfur carrier)-H + 5'-deoxyadenosine + L-methionine + A + S-adenosyl-L-homocysteine + 2 H(+). Its function is as follows. Catalyzes the methylthiolation of an aspartic acid residue of ribosomal protein uS12. The protein is Ribosomal protein uS12 methylthiotransferase RimO of Colwellia psychrerythraea (strain 34H / ATCC BAA-681) (Vibrio psychroerythus).